The primary structure comprises 485 residues: Protein nucleotidyltransferase YdiU (485 aa).

8 residues coordinate ATP: glycine 90, glycine 92, arginine 93, lysine 113, aspartate 125, glycine 126, arginine 176, and arginine 183. Aspartate 252 acts as the Proton acceptor in catalysis. Asparagine 253 and aspartate 262 together coordinate Mg(2+). An ATP-binding site is contributed by aspartate 262.

Belongs to the SELO family. Mg(2+) is required as a cofactor. Mn(2+) serves as cofactor.

It catalyses the reaction L-seryl-[protein] + ATP = 3-O-(5'-adenylyl)-L-seryl-[protein] + diphosphate. The enzyme catalyses L-threonyl-[protein] + ATP = 3-O-(5'-adenylyl)-L-threonyl-[protein] + diphosphate. The catalysed reaction is L-tyrosyl-[protein] + ATP = O-(5'-adenylyl)-L-tyrosyl-[protein] + diphosphate. It carries out the reaction L-histidyl-[protein] + UTP = N(tele)-(5'-uridylyl)-L-histidyl-[protein] + diphosphate. It catalyses the reaction L-seryl-[protein] + UTP = O-(5'-uridylyl)-L-seryl-[protein] + diphosphate. The enzyme catalyses L-tyrosyl-[protein] + UTP = O-(5'-uridylyl)-L-tyrosyl-[protein] + diphosphate. In terms of biological role, nucleotidyltransferase involved in the post-translational modification of proteins. It can catalyze the addition of adenosine monophosphate (AMP) or uridine monophosphate (UMP) to a protein, resulting in modifications known as AMPylation and UMPylation. This is Protein nucleotidyltransferase YdiU from Aliivibrio fischeri (strain MJ11) (Vibrio fischeri).